The primary structure comprises 383 residues: Lipid-A-disaccharide synthase (383 aa).

Belongs to the LpxB family.

It carries out the reaction 2-N,3-O-bis[(3R)-3-hydroxytetradecanoyl]-alpha-D-glucosaminyl 1-phosphate + UDP-2-N,3-O-bis[(3R)-3-hydroxytetradecanoyl]-alpha-D-glucosamine = lipid A disaccharide (E. coli) + UDP + H(+). The catalysed reaction is a lipid X + a UDP-2-N,3-O-bis[(3R)-3-hydroxyacyl]-alpha-D-glucosamine = a lipid A disaccharide + UDP + H(+). The protein operates within glycolipid biosynthesis; lipid IV(A) biosynthesis; lipid IV(A) from (3R)-3-hydroxytetradecanoyl-[acyl-carrier-protein] and UDP-N-acetyl-alpha-D-glucosamine: step 5/6. Functionally, condensation of UDP-2,3-diacylglucosamine and 2,3-diacylglucosamine-1-phosphate to form lipid A disaccharide, a precursor of lipid A, a phosphorylated glycolipid that anchors the lipopolysaccharide to the outer membrane of the cell. The chain is Lipid-A-disaccharide synthase from Klebsiella pneumoniae (strain 342).